The following is a 415-amino-acid chain: Serine hydroxymethyltransferase (415 aa).

Residues L121 and 125-127 (GHL) contribute to the (6S)-5,6,7,8-tetrahydrofolate site. The residue at position 229 (K229) is an N6-(pyridoxal phosphate)lysine. A (6S)-5,6,7,8-tetrahydrofolate-binding site is contributed by 352–354 (SPF).

Belongs to the SHMT family. In terms of assembly, homodimer. Pyridoxal 5'-phosphate serves as cofactor.

The protein localises to the cytoplasm. The enzyme catalyses (6R)-5,10-methylene-5,6,7,8-tetrahydrofolate + glycine + H2O = (6S)-5,6,7,8-tetrahydrofolate + L-serine. It participates in one-carbon metabolism; tetrahydrofolate interconversion. The protein operates within amino-acid biosynthesis; glycine biosynthesis; glycine from L-serine: step 1/1. In terms of biological role, catalyzes the reversible interconversion of serine and glycine with tetrahydrofolate (THF) serving as the one-carbon carrier. This reaction serves as the major source of one-carbon groups required for the biosynthesis of purines, thymidylate, methionine, and other important biomolecules. Also exhibits THF-independent aldolase activity toward beta-hydroxyamino acids, producing glycine and aldehydes, via a retro-aldol mechanism. In Methylobacillus flagellatus (strain ATCC 51484 / DSM 6875 / VKM B-1610 / KT), this protein is Serine hydroxymethyltransferase.